The sequence spans 624 residues: Bifunctional 3'-phosphoadenosine 5'-phosphosulfate synthase 1 (624 aa).

Met-1 carries the N-acetylmethionine modification. The interval 1–225 (MEIPGSLCKK…VVELLQERDI (225 aa)) is adenylyl-sulfate kinase. Lys-12 is subject to N6-acetyllysine. 62 to 67 (GAGKTT) contributes to the ATP binding site. Adenosine 5'-phosphosulfate contacts are provided by residues 89 to 92 (DNIR), Phe-101, 106 to 109 (REEN), 132 to 133 (IS), Lys-171, and 184 to 185 (GF). Residues Cys-207, Cys-212, 419 to 422 (QLRN), 521 to 525 (GRDPA), and Ala-563 contribute to the ATP site. The interval 234–624 (VKELYVPENK…TEYYKSLEKA (391 aa)) is sulfate adenylyltransferase.

This sequence in the N-terminal section; belongs to the APS kinase family. It in the C-terminal section; belongs to the sulfate adenylyltransferase family. As to quaternary structure, homodimer. Expressed in testis, pancreas, kidney, thymus, prostate, ovary, small intestine, colon, leukocytes and liver. Also expressed in high endothelial venules (HEV) cells and in cartilage.

It catalyses the reaction sulfate + ATP + H(+) = adenosine 5'-phosphosulfate + diphosphate. The catalysed reaction is adenosine 5'-phosphosulfate + ATP = 3'-phosphoadenylyl sulfate + ADP + H(+). The protein operates within sulfur metabolism; sulfate assimilation. Its activity is regulated as follows. Inhibited by chlorate. The kinase activity is subject to inhibition by the substrate adenylyl sulfate. Its function is as follows. Bifunctional enzyme with both ATP sulfurylase and APS kinase activity, which mediates two steps in the sulfate activation pathway. The first step is the transfer of a sulfate group to ATP to yield adenosine 5'-phosphosulfate (APS), and the second step is the transfer of a phosphate group from ATP to APS yielding 3'-phosphoadenylylsulfate (PAPS: activated sulfate donor used by sulfotransferase). In mammals, PAPS is the sole source of sulfate; APS appears to be only an intermediate in the sulfate-activation pathway. Required for normal biosynthesis of sulfated L-selectin ligands in endothelial cells. This is Bifunctional 3'-phosphoadenosine 5'-phosphosulfate synthase 1 (PAPSS1) from Homo sapiens (Human).